The sequence spans 93 residues: YcgL domain-containing protein PSHAb0508 (93 aa).

In terms of domain architecture, YcgL spans 1–85 (MLTAVYKSKK…PQENLLSQLR (85 aa)).

This Pseudoalteromonas translucida (strain TAC 125) protein is YcgL domain-containing protein PSHAb0508.